Consider the following 245-residue polypeptide: Adenosylcobinamide-GDP ribazoletransferase (245 aa).

The next 6 helical transmembrane spans lie at 35-55, 108-128, 137-157, 176-196, 197-217, and 222-242; these read WFPL…ALGL, IGAF…IGAH, GVLI…AALV, IAIG…TPVM, TTVT…HLAR, and INGD…LLAA.

This sequence belongs to the CobS family. Mg(2+) is required as a cofactor.

The protein resides in the cell inner membrane. The catalysed reaction is alpha-ribazole + adenosylcob(III)inamide-GDP = adenosylcob(III)alamin + GMP + H(+). It catalyses the reaction alpha-ribazole 5'-phosphate + adenosylcob(III)inamide-GDP = adenosylcob(III)alamin 5'-phosphate + GMP + H(+). It participates in cofactor biosynthesis; adenosylcobalamin biosynthesis; adenosylcobalamin from cob(II)yrinate a,c-diamide: step 7/7. Its function is as follows. Joins adenosylcobinamide-GDP and alpha-ribazole to generate adenosylcobalamin (Ado-cobalamin). Also synthesizes adenosylcobalamin 5'-phosphate from adenosylcobinamide-GDP and alpha-ribazole 5'-phosphate. This chain is Adenosylcobinamide-GDP ribazoletransferase, found in Nitratidesulfovibrio vulgaris (strain DP4) (Desulfovibrio vulgaris).